Here is a 494-residue protein sequence, read N- to C-terminus: Glycerol kinase (494 aa).

Position 12 (threonine 12) interacts with ADP. The ATP site is built by threonine 12, threonine 13, and serine 14. Threonine 12 is a sn-glycerol 3-phosphate binding site. Arginine 16 lines the ADP pocket. Residues arginine 82, glutamate 83, tyrosine 134, and aspartate 241 each contribute to the sn-glycerol 3-phosphate site. Glycerol contacts are provided by arginine 82, glutamate 83, tyrosine 134, aspartate 241, and glutamine 242. ADP-binding residues include threonine 263 and glycine 306. ATP contacts are provided by threonine 263, glycine 306, glutamine 310, and glycine 407. Glycine 407 provides a ligand contact to ADP.

This sequence belongs to the FGGY kinase family.

It catalyses the reaction glycerol + ATP = sn-glycerol 3-phosphate + ADP + H(+). It functions in the pathway polyol metabolism; glycerol degradation via glycerol kinase pathway; sn-glycerol 3-phosphate from glycerol: step 1/1. With respect to regulation, inhibited by fructose 1,6-bisphosphate (FBP). Its function is as follows. Key enzyme in the regulation of glycerol uptake and metabolism. Catalyzes the phosphorylation of glycerol to yield sn-glycerol 3-phosphate. In Brachyspira hyodysenteriae (strain ATCC 49526 / WA1), this protein is Glycerol kinase.